Consider the following 880-residue polypeptide: Alanine--tRNA ligase (880 aa).

Zn(2+) is bound by residues H558, H562, C663, and H667.

This sequence belongs to the class-II aminoacyl-tRNA synthetase family. It depends on Zn(2+) as a cofactor.

It is found in the cytoplasm. The catalysed reaction is tRNA(Ala) + L-alanine + ATP = L-alanyl-tRNA(Ala) + AMP + diphosphate. Its function is as follows. Catalyzes the attachment of alanine to tRNA(Ala) in a two-step reaction: alanine is first activated by ATP to form Ala-AMP and then transferred to the acceptor end of tRNA(Ala). Also edits incorrectly charged Ser-tRNA(Ala) and Gly-tRNA(Ala) via its editing domain. This is Alanine--tRNA ligase from Mycoplasmopsis agalactiae (strain NCTC 10123 / CIP 59.7 / PG2) (Mycoplasma agalactiae).